The sequence spans 330 residues: 4,5-dihydroxyphthalate decarboxylase (330 aa).

This sequence to P.putida DHP decarboxylase.

It carries out the reaction 4,5-dihydroxyphthalate + H(+) = 3,4-dihydroxybenzoate + CO2. The protein operates within xenobiotic degradation; phthalate degradation; 3,4-dihydroxybenzoate from phthalate: step 3/3. This is 4,5-dihydroxyphthalate decarboxylase (phtD) from Comamonas testosteroni (Pseudomonas testosteroni).